The primary structure comprises 318 residues: Ribosomal RNA small subunit methyltransferase H (318 aa).

S-adenosyl-L-methionine is bound by residues 35 to 37 (AGH), aspartate 55, phenylalanine 84, aspartate 105, and glutamine 112. Positions 294 to 318 (SDSELSENNRSRSAKLRIAEKIKSR) are disordered.

Belongs to the methyltransferase superfamily. RsmH family.

It is found in the cytoplasm. It catalyses the reaction cytidine(1402) in 16S rRNA + S-adenosyl-L-methionine = N(4)-methylcytidine(1402) in 16S rRNA + S-adenosyl-L-homocysteine + H(+). Functionally, specifically methylates the N4 position of cytidine in position 1402 (C1402) of 16S rRNA. The sequence is that of Ribosomal RNA small subunit methyltransferase H from Enterococcus faecalis (strain ATCC 700802 / V583).